The sequence spans 100 residues: Probable DNA-binding protein HU (100 aa).

Belongs to the bacterial histone-like protein family.

Its function is as follows. Histone-like DNA-binding protein which is capable of wrapping DNA to stabilize it, and thus to prevent its denaturation under extreme environmental conditions. The protein is Probable DNA-binding protein HU (hup) of Chlamydia muridarum (strain MoPn / Nigg).